Consider the following 188-residue polypeptide: Cell division protein ZapC (188 aa).

Belongs to the ZapC family. As to quaternary structure, interacts directly with FtsZ.

It is found in the cytoplasm. Contributes to the efficiency of the cell division process by stabilizing the polymeric form of the cell division protein FtsZ. Acts by promoting interactions between FtsZ protofilaments and suppressing the GTPase activity of FtsZ. The polypeptide is Cell division protein ZapC (Psychromonas ingrahamii (strain DSM 17664 / CCUG 51855 / 37)).